The primary structure comprises 309 residues: Carboxylesterase Culp6 homolog (309 aa).

Residues I5–V25 traverse the membrane as a helical segment. A disulfide bridge links C55 with C146. Active-site residues include S157, D253, and H279. A disulfide bridge links C249 with C256.

Belongs to the cutinase family.

The protein resides in the cell membrane. It catalyses the reaction a butanoate ester + H2O = an aliphatic alcohol + butanoate + H(+). With respect to regulation, inhibited by tetrahydrolipstatin (THL), a specific lipase inhibitor. Functionally, esterase that may be involved in cell wall biosynthesis and/or maintenance. Hydrolyzes pNP-butyrate (C4). The sequence is that of Carboxylesterase Culp6 homolog from Corynebacterium glutamicum (strain ATCC 13032 / DSM 20300 / JCM 1318 / BCRC 11384 / CCUG 27702 / LMG 3730 / NBRC 12168 / NCIMB 10025 / NRRL B-2784 / 534).